The sequence spans 710 residues: MEEMEEELKCPVCGSFYREPIILPCSHNICQACARNILVQTPESESPQSRRASGSGVSDYDYLDLDKMSLYSEADSGYGSYGGFASAPTTPCQKSPNGVRVFPPAMPPPATHLSPALASVPRNSCITCPQCHRSLILDDRGLRGFPKNRVLEGVIDRYQQSKAAALKCQLCEKAPKEATVMCEQCDVFYCDPCRLRCHPPRGPLAKHRLVPPAQGRVSRRLSPRKVSTCTDHELENHSMYCVQCKMPVCYQCLEEGKHSSHEVKALGAMWKLHKSQLSQALNGLSDRAKEAKEFLVQLRNMVQQIQENSVEFEACLVAQCDALIDALNRRKAQLLARVNKEHEHKLKVVRDQISHCTVKLRQTTGLMEYCLEVIKENDPSGFLQISDALIRRVHLTEDQWGKGTLTPRMTTDFDLSLDNSPLLQSIHQLDFVQMKASSPVPATPILQLEDCCTHNNSATLSWKQPPLSTVPAEGYILELDDGNGGQFREVYVGKETMCTVDGLHFNSTYNARIKAFNKTGVSQYSKTLVLQTSEVAWFAFDPGSAHSDIIFSNDNLTVTCSSYDDRVVLGKTGFSKGVHYWELTVDRYDNHPDPAFGVARIDVMKDVMLGKDDKAWAMYVDNNRSWFMHNNSHTNRTEGGITKGATIGVLLDFNRKTLTFFINDEQQGPIAFENVEGLFFPAVSLNRNVQVTLHTGLQVPDFYSSRASIA.

The segment at 10–50 adopts an RING-type zinc-finger fold; that stretch reads CPVCGSFYREPIILPCSHNICQACARNILVQTPESESPQSR. Phosphothreonine is present on Thr-41. Ser-44, Ser-46, Ser-49, and Ser-53 each carry phosphoserine. B box-type zinc fingers lie at residues 163-212 and 224-266; these read AAAL…LVPP and RKVS…VKAL. 8 residues coordinate Zn(2+): Cys-168, Cys-171, Cys-193, His-198, Cys-229, His-232, Cys-252, and His-258. A coiled-coil region spans residues 273–340; that stretch reads HKSQLSQALN…KAQLLARVNK (68 aa). Positions 374–432 constitute a COS domain; sequence IKENDPSGFLQISDALIRRVHLTEDQWGKGTLTPRMTTDFDLSLDNSPLLQSIHQLDFV. In terms of domain architecture, Fibronectin type-III spans 440–535; sequence VPATPILQLE…KTLVLQTSEV (96 aa). One can recognise a B30.2/SPRY domain in the interval 533–702; the sequence is SEVAWFAFDP…LHTGLQVPDF (170 aa).

The protein belongs to the TRIM/RBCC family. As to quaternary structure, interacts with SNAP25. Post-translationally, auto-ubiquitinated.

The protein localises to the cytoplasm. It is found in the cell projection. The protein resides in the dendrite. It localises to the cytoplasmic vesicle. Its subcellular location is the secretory vesicle. The protein localises to the synaptic vesicle. It is found in the synapse. The protein resides in the cytoskeleton. It carries out the reaction S-ubiquitinyl-[E2 ubiquitin-conjugating enzyme]-L-cysteine + [acceptor protein]-L-lysine = [E2 ubiquitin-conjugating enzyme]-L-cysteine + N(6)-ubiquitinyl-[acceptor protein]-L-lysine.. It functions in the pathway protein modification; protein ubiquitination. In terms of biological role, E3 ubiquitin-protein ligase which ubiquitinates itself in cooperation with an E2 enzyme UBE2D2/UBC4 and serves as a targeting signal for proteasomal degradation. May play a role in regulation of neuronal functions. May act as a regulator of synaptic vesicle exocytosis by controlling the availability of SNAP25 for the SNARE complex formation. The polypeptide is E3 ubiquitin-protein ligase TRIM9 (TRIM9) (Bos taurus (Bovine)).